The following is a 228-amino-acid chain: Aspartate racemase (228 aa).

Asp47–Thr49 contacts substrate. Cys82 functions as the Proton donor/acceptor in the catalytic mechanism. Residues Asn83 to Ala85 and Lys164 contribute to the substrate site. Cys194 acts as the Proton donor/acceptor in catalysis.

Belongs to the aspartate/glutamate racemases family. Homodimer. The existence of the interchain disulfide bond seen in the crystal structures is uncertain, but disulfide bonds have been reported for cytoplasmic proteins from thermophiles.

The enzyme catalyses L-aspartate = D-aspartate. With respect to regulation, weakly inhibited by citrate, but not by asparagine. The chain is Aspartate racemase from Pyrococcus horikoshii (strain ATCC 700860 / DSM 12428 / JCM 9974 / NBRC 100139 / OT-3).